We begin with the raw amino-acid sequence, 687 residues long: Mediator of RNA polymerase II transcription subunit 17 (687 aa).

The span at 30–43 (LSSNPNSSLHSPTS) shows a compositional bias: low complexity. 2 disordered regions span residues 30–70 (LSSN…NKTK) and 130–189 (QLGS…ETDD). 3 stretches are compositionally biased toward basic and acidic residues: residues 56–70 (TSIRLEGDELENKTK), 136–147 (SDGHNSEKKDTD), and 167–183 (KDNPVDSRNETDHKTNE).

Belongs to the Mediator complex subunit 17 family. In terms of assembly, component of the Mediator complex, which is composed of at least 21 subunits that form three structurally distinct submodules. The Mediator head module contains MED6, MED8, MED11, SRB4/MED17, SRB5/MED18, ROX3/MED19, SRB2/MED20 and SRB6/MED22, the middle module contains MED1, MED4, NUT1/MED5, MED7, CSE2/MED9, NUT2/MED10, SRB7/MED21 and SOH1/MED31, and the tail module contains MED2, PGD1/MED3, RGR1/MED14, GAL11/MED15 and SIN4/MED16. The head and the middle modules interact directly with RNA polymerase II, whereas the elongated tail module interacts with gene-specific regulatory proteins. The head module may also interact with the TFIIF complex. SRB4/MED17 interacts directly with MED6, MED11, ROX3/MED19, SRB2/MED20 and SRB6/MED22. Interacts directly with the activator GAL4.

It localises to the nucleus. Component of the Mediator complex, a coactivator involved in the regulated transcription of nearly all RNA polymerase II-dependent genes. Mediator functions as a bridge to convey information from gene-specific regulatory proteins to the basal RNA polymerase II transcription machinery. The Mediator complex, having a compact conformation in its free form, is recruited to promoters by direct interactions with regulatory proteins and serves for the assembly of a functional preinitiation complex with RNA polymerase II and the general transcription factors. The Mediator complex unfolds to an extended conformation and partially surrounds RNA polymerase II, specifically interacting with the unphosphorylated form of the C-terminal domain (CTD) of RNA polymerase II. The Mediator complex dissociates from the RNA polymerase II holoenzyme and stays at the promoter when transcriptional elongation begins. In Saccharomyces cerevisiae (strain ATCC 204508 / S288c) (Baker's yeast), this protein is Mediator of RNA polymerase II transcription subunit 17 (SRB4).